A 323-amino-acid chain; its full sequence is Beta-ketoacyl-[acyl-carrier-protein] synthase III (323 aa).

Catalysis depends on residues C112 and H250. The ACP-binding stretch occupies residues 251 to 255 (QANQR). The active site involves N280.

The protein belongs to the thiolase-like superfamily. FabH family. In terms of assembly, homodimer.

It localises to the cytoplasm. The enzyme catalyses malonyl-[ACP] + acetyl-CoA + H(+) = 3-oxobutanoyl-[ACP] + CO2 + CoA. The protein operates within lipid metabolism; fatty acid biosynthesis. Its function is as follows. Catalyzes the condensation reaction of fatty acid synthesis by the addition to an acyl acceptor of two carbons from malonyl-ACP. Catalyzes the first condensation reaction which initiates fatty acid synthesis and may therefore play a role in governing the total rate of fatty acid production. Possesses both acetoacetyl-ACP synthase and acetyl transacylase activities. Its substrate specificity determines the biosynthesis of branched-chain and/or straight-chain of fatty acids. This chain is Beta-ketoacyl-[acyl-carrier-protein] synthase III, found in Oenococcus oeni (strain ATCC BAA-331 / PSU-1).